A 194-amino-acid chain; its full sequence is CD-NTase-associated protein 15 (194 aa).

The required for cell toxicity stretch occupies residues 1-73; the sequence is MRMWELLPSK…DYLKHKFCPD (73 aa). The next 2 membrane-spanning stretches (helical) occupy residues 15–35 and 43–63; these read ISTI…GQPV and ITTI…YFYI.

It belongs to the CBASS Cap15 membrane effector family. The beta barrel domain oligomerizes; in the presence of cyclic nucleotides (probably 3',3'-cGAMP, but the cognate CD-NTase makes at least 4 other cyclic nucleotides) higher-level oligomers are detected.

It is found in the cell inner membrane. Effector protein of a CBASS antivirus system. CBASS (cyclic oligonucleotide-based antiphage signaling system) provides immunity against bacteriophages. The CD-NTase protein (CdnB) synthesizes cyclic nucleotides in response to infection; these serve as specific second messenger signals. The signals activate a diverse range of effectors, leading to bacterial cell death and thus abortive phage infection. Causes cell death in response to 3',3'-cGAMP upon coexpression in E.coli with V.cholerae DncV; inactivating DncV prevents cell death. Upon induction in E.coli with non-cognate DncV, the cell inner membrane shrinks and separates from the cell wall with a concomitant increase in the periplasm. Binds cyclic nucleotide second messenger 3',3'-cGAMP, probably oligomerizing, and induces cell membrane shrinkage and rupture, leading to cell death. A type I CBASS system. Its function is as follows. Protects E.coli against phage infection. When the CBASS operon (cdnB-cap15) is introduced in E.coli MG1655 there is about 100-fold protection against phage T2 and about 10-fold protection against phage T5 and T6. This chain is CD-NTase-associated protein 15, found in Escherichia albertii.